The sequence spans 475 residues: Adenosylhomocysteinase (475 aa).

Residues T61, D140, and E200 each contribute to the substrate site. 201 to 203 (TTT) provides a ligand contact to NAD(+). Substrate-binding residues include K230 and D234. Residues N235, 264 to 269 (GYGDVG), E287, N322, 343 to 345 (IGH), and N388 each bind NAD(+).

This sequence belongs to the adenosylhomocysteinase family. It depends on NAD(+) as a cofactor.

The protein resides in the cytoplasm. It catalyses the reaction S-adenosyl-L-homocysteine + H2O = L-homocysteine + adenosine. The protein operates within amino-acid biosynthesis; L-homocysteine biosynthesis; L-homocysteine from S-adenosyl-L-homocysteine: step 1/1. Functionally, may play a key role in the regulation of the intracellular concentration of adenosylhomocysteine. The polypeptide is Adenosylhomocysteinase (Paracidovorax citrulli (strain AAC00-1) (Acidovorax citrulli)).